Reading from the N-terminus, the 100-residue chain is Large ribosomal subunit protein uL23 (100 aa).

Belongs to the universal ribosomal protein uL23 family. Part of the 50S ribosomal subunit. Contacts protein L29, and trigger factor when it is bound to the ribosome.

Its function is as follows. One of the early assembly proteins it binds 23S rRNA. One of the proteins that surrounds the polypeptide exit tunnel on the outside of the ribosome. Forms the main docking site for trigger factor binding to the ribosome. This chain is Large ribosomal subunit protein uL23, found in Baumannia cicadellinicola subsp. Homalodisca coagulata.